The chain runs to 192 residues: Thymidine kinase (192 aa).

ATP-binding positions include 9-16 (SSMNAGKS) and 87-90 (DEAQ). The active-site Proton acceptor is the E88. Zn(2+) is bound by residues C145, C147, C182, and H185.

It belongs to the thymidine kinase family. As to quaternary structure, homotetramer.

It localises to the cytoplasm. It carries out the reaction thymidine + ATP = dTMP + ADP + H(+). This Colwellia psychrerythraea (strain 34H / ATCC BAA-681) (Vibrio psychroerythus) protein is Thymidine kinase.